A 226-amino-acid chain; its full sequence is Exosome complex component rrp46 (226 aa).

Residues 205–226 (NESDGHENEKNPKEDVEMDVVA) are disordered. Basic and acidic residues predominate over residues 207–219 (SDGHENEKNPKED).

It belongs to the RNase PH family. As to quaternary structure, component of the RNA exosome complex. Specifically part of the catalytically inactive RNA exosome core complex (Exo-9) which may associate with the catalytic subunits rrp6 and dis3 in cytoplasmic- and nuclear-specific RNA exosome complex forms. Exo-9 is formed by a hexameric base ring of RNase PH domain-containing subunits and a cap ring consisting of csl4, rrp4 and rrp40.

The protein localises to the cytoplasm. Its subcellular location is the nucleus. It localises to the nucleolus. Functionally, non-catalytic component of the RNA exosome complex which has 3'-&gt;5' exoribonuclease activity and participates in a multitude of cellular RNA processing and degradation events. In the nucleus, the RNA exosome complex is involved in proper maturation of stable RNA species such as rRNA, snRNA and snoRNA, in the elimination of RNA processing by-products and non-coding 'pervasive' transcripts, such as antisense RNA species and cryptic unstable transcripts (CUTs), and of mRNAs with processing defects, thereby limiting or excluding their export to the cytoplasm. In the cytoplasm, the RNA exosome complex is involved in general mRNA turnover and in RNA surveillance pathways, preventing translation of aberrant mRNAs. The catalytic inactive RNA exosome core complex of 9 subunits (Exo-9) is proposed to play a pivotal role in the binding and presentation of RNA for ribonucleolysis, and to serve as a scaffold for the association with catalytic subunits and accessory proteins or complexes. ski6 is part of the hexameric ring of RNase PH domain-containing subunits proposed to form a central channel which threads RNA substrates for degradation. This Schizosaccharomyces pombe (strain 972 / ATCC 24843) (Fission yeast) protein is Exosome complex component rrp46 (rrp46).